A 728-amino-acid polypeptide reads, in one-letter code: Nucleolar GTP-binding protein 2 (728 aa).

Residue M1 is modified to N-acetylmethionine. Residues 1–33 are disordered; that stretch reads MVKPKYKGRSTINRSAASTNPDRVQGAGGQNMR. The segment covering 10-22 has biased composition (polar residues); it reads STINRSAASTNPD. The CP-type G domain occupies 207–368; that stretch reads WGELYKVIDS…LIDCPGVVYP (162 aa). GTP-binding positions include 317-324 and 361-365; these read GYPNVGKS and DCPGV. 3 disordered regions span residues 462 to 521, 538 to 595, and 636 to 728; these read PPNA…RNSE, VGPQ…DTKA, and YKEE…RQKQ. Positions 480 to 489 are enriched in low complexity; the sequence is EVPTETTQNN. Residues 498–520 show a composition bias toward basic and acidic residues; it reads EVERSDSITEKEPEGDCSQDRNS. A Phosphoserine modification is found at S504. Residues 553 to 586 are compositionally biased toward acidic residues; sequence SDLEDLESSGEEEEQEQEQPGEDAEEERSPDTQE. Residues 718–728 show a composition bias toward basic residues; sequence KHRRNKFRQKQ.

It belongs to the TRAFAC class YlqF/YawG GTPase family. NOG2 subfamily. In terms of assembly, interacts with LYAR and RPL23A. Interacts with the nuclear importin-beta receptor and, at a lower extent, with importin-alpha.

Its subcellular location is the nucleus. It is found in the nucleolus. Its function is as follows. GTPase that associates with pre-60S ribosomal subunits in the nucleolus and is required for their nuclear export and maturation. May promote cell proliferation possibly by increasing p53/TP53 protein levels, and consequently those of its downstream product CDKN1A/p21, and decreasing RPL23A protein levels. In Mus musculus (Mouse), this protein is Nucleolar GTP-binding protein 2 (Gnl2).